The following is a 295-amino-acid chain: ATP synthase gamma chain (295 aa).

This sequence belongs to the ATPase gamma chain family. F-type ATPases have 2 components, CF(1) - the catalytic core - and CF(0) - the membrane proton channel. CF(1) has five subunits: alpha(3), beta(3), gamma(1), delta(1), epsilon(1). CF(0) has three main subunits: a, b and c.

It localises to the cell inner membrane. Produces ATP from ADP in the presence of a proton gradient across the membrane. The gamma chain is believed to be important in regulating ATPase activity and the flow of protons through the CF(0) complex. In Paraburkholderia phymatum (strain DSM 17167 / CIP 108236 / LMG 21445 / STM815) (Burkholderia phymatum), this protein is ATP synthase gamma chain.